The primary structure comprises 644 residues: Macrolide export ATP-binding/permease protein MacB (644 aa).

The Cytoplasmic portion of the chain corresponds to 1-268 (MNIIEIKQLN…SAIVAHKMRS (268 aa)). Positions 4-242 (IEIKQLNRYF…VKNPSVFKGR (239 aa)) constitute an ABC transporter domain. 40–47 (GQSGSGKS) serves as a coordination point for ATP. A helical membrane pass occupies residues 269–289 (LLTMLGIIIGITSVVSVVALG). The Periplasmic segment spans residues 290–523 (NGSQQKILEN…TGTMKLLISS (234 aa)). Residues 524-544 (IAFISLIVGGIGVMNIMLVSV) form a helical membrane-spanning segment. The Cytoplasmic portion of the chain corresponds to 545-573 (TERTKEIGVRMAIGARQINILQQFLIEAV). A helical transmembrane segment spans residues 574-594 (LICLIGGVAGILLSVLIGVLF). The Periplasmic segment spans residues 595 to 607 (NSFITDFSMDFST). A helical membrane pass occupies residues 608 to 628 (ASIVTAVLFSTLIGVLFGYMP). Residues 629-644 (AKKAAELNPITALAQE) are Cytoplasmic-facing.

It belongs to the ABC transporter superfamily. Macrolide exporter (TC 3.A.1.122) family. As to quaternary structure, homodimer. Part of the tripartite efflux system MacAB-TdeA, which is composed of an inner membrane transporter, MacB, a periplasmic membrane fusion protein, MacA, and an outer membrane component, TdeA. The complex forms a large protein conduit and can translocate molecules across both the inner and outer membranes. Interacts with MacA.

The protein resides in the cell inner membrane. Part of the tripartite efflux system MacAB-TdeA. MacB is a non-canonical ABC transporter that contains transmembrane domains (TMD), which form a pore in the inner membrane, and an ATP-binding domain (NBD), which is responsible for energy generation. Confers resistance against macrolides. The chain is Macrolide export ATP-binding/permease protein MacB from Aggregatibacter actinomycetemcomitans (Actinobacillus actinomycetemcomitans).